Here is a 148-residue protein sequence, read N- to C-terminus: Protein NrdI (148 aa).

It belongs to the NrdI family.

Its function is as follows. Probably involved in ribonucleotide reductase function. This Corynebacterium glutamicum (strain R) protein is Protein NrdI.